The following is an 810-amino-acid chain: Phenylalanine--tRNA ligase beta subunit (810 aa).

Positions 39–154 (APPTEKIVVG…EGTPVGQDIR (116 aa)) constitute a tRNA-binding domain. The B5 domain maps to 405 to 480 (PQRAPVSMRA…RIYGFEKIPA (76 aa)). Asp-458, Asp-464, Glu-467, and Glu-468 together coordinate Mg(2+). The 103-residue stretch at 707–809 (SKFPPVRRDI…MARVYGARLR (103 aa)) folds into the FDX-ACB domain.

The protein belongs to the phenylalanyl-tRNA synthetase beta subunit family. Type 1 subfamily. Tetramer of two alpha and two beta subunits. Requires Mg(2+) as cofactor.

It localises to the cytoplasm. It carries out the reaction tRNA(Phe) + L-phenylalanine + ATP = L-phenylalanyl-tRNA(Phe) + AMP + diphosphate + H(+). The protein is Phenylalanine--tRNA ligase beta subunit of Burkholderia mallei (strain ATCC 23344).